A 186-amino-acid polypeptide reads, in one-letter code: Threonylcarbamoyl-AMP synthase (186 aa).

A YrdC-like domain is found at M1 to A186.

It belongs to the SUA5 family. TsaC subfamily.

It is found in the cytoplasm. The enzyme catalyses L-threonine + hydrogencarbonate + ATP = L-threonylcarbamoyladenylate + diphosphate + H2O. Functionally, required for the formation of a threonylcarbamoyl group on adenosine at position 37 (t(6)A37) in tRNAs that read codons beginning with adenine. Catalyzes the conversion of L-threonine, HCO(3)(-)/CO(2) and ATP to give threonylcarbamoyl-AMP (TC-AMP) as the acyladenylate intermediate, with the release of diphosphate. The chain is Threonylcarbamoyl-AMP synthase from Idiomarina loihiensis (strain ATCC BAA-735 / DSM 15497 / L2-TR).